Consider the following 207-residue polypeptide: Granulocyte colony-stimulating factor (207 aa).

The N-terminal stretch at 1 to 30 (MAGPATQSPMKLMALQLLLWHSALWTVQEA) is a signal peptide. 2 disulfides stabilise this stretch: cysteine 69/cysteine 75 and cysteine 97/cysteine 107. An O-linked (GalNAc...) threonine glycan is attached at threonine 166.

Belongs to the IL-6 superfamily. Monomer. Post-translationally, O-glycan consists of Gal-GalNAc disaccharide which can be modified with up to two sialic acid residues (done in recombinantly expressed G-CSF from CHO cells).

Its subcellular location is the secreted. Its function is as follows. Granulocyte/macrophage colony-stimulating factors are cytokines that act in hematopoiesis by controlling the production, differentiation, and function of 2 related white cell populations of the blood, the granulocytes and the monocytes-macrophages. This CSF induces granulocytes. This chain is Granulocyte colony-stimulating factor (CSF3), found in Homo sapiens (Human).